We begin with the raw amino-acid sequence, 398 residues long: O-methyltransferase aoiO (398 aa).

Asp-251 contributes to the S-adenosyl-L-methionine binding site. His-299 serves as the catalytic Proton acceptor.

It belongs to the class I-like SAM-binding methyltransferase superfamily. Cation-independent O-methyltransferase family.

Functionally, O-methyltransferase; part of the gene cluster that mediates the biosynthesis of a methylated derivative of known natural products orthosporin and diaporthin. Seems not to be involved in the biosynthesis of the identified final product of the pathway and its function has still to be determined. The protein is O-methyltransferase aoiO of Aspergillus oryzae (strain ATCC 42149 / RIB 40) (Yellow koji mold).